We begin with the raw amino-acid sequence, 629 residues long: 1-deoxy-D-xylulose-5-phosphate synthase (629 aa).

Thiamine diphosphate contacts are provided by residues histidine 73 and 114 to 116 (GHA). Position 145 (aspartate 145) interacts with Mg(2+). Thiamine diphosphate-binding positions include 146-147 (GA), asparagine 174, tyrosine 284, and glutamate 360. Asparagine 174 serves as a coordination point for Mg(2+).

This sequence belongs to the transketolase family. DXPS subfamily. In terms of assembly, homodimer. It depends on Mg(2+) as a cofactor. Requires thiamine diphosphate as cofactor.

It catalyses the reaction D-glyceraldehyde 3-phosphate + pyruvate + H(+) = 1-deoxy-D-xylulose 5-phosphate + CO2. The protein operates within metabolic intermediate biosynthesis; 1-deoxy-D-xylulose 5-phosphate biosynthesis; 1-deoxy-D-xylulose 5-phosphate from D-glyceraldehyde 3-phosphate and pyruvate: step 1/1. Catalyzes the acyloin condensation reaction between C atoms 2 and 3 of pyruvate and glyceraldehyde 3-phosphate to yield 1-deoxy-D-xylulose-5-phosphate (DXP). The sequence is that of 1-deoxy-D-xylulose-5-phosphate synthase from Thermomicrobium roseum (strain ATCC 27502 / DSM 5159 / P-2).